Consider the following 351-residue polypeptide: Glycerol-1-phosphate dehydrogenase [NAD(P)+] (351 aa).

NAD(+) is bound by residues 97–101 and 119–122; these read GKVID and TSPS. Position 124 (Asp124) interacts with substrate. Ser128 is a binding site for NAD(+). Asp171 serves as a coordination point for substrate. Zn(2+) is bound by residues Asp171 and His251. His255 is a substrate binding site. Zn(2+) is bound at residue His267.

This sequence belongs to the glycerol-1-phosphate dehydrogenase family. Homodimer. Requires Zn(2+) as cofactor.

It is found in the cytoplasm. It carries out the reaction sn-glycerol 1-phosphate + NAD(+) = dihydroxyacetone phosphate + NADH + H(+). It catalyses the reaction sn-glycerol 1-phosphate + NADP(+) = dihydroxyacetone phosphate + NADPH + H(+). The protein operates within membrane lipid metabolism; glycerophospholipid metabolism. In terms of biological role, catalyzes the NAD(P)H-dependent reduction of dihydroxyacetonephosphate (DHAP or glycerone phosphate) to glycerol 1-phosphate (G1P). The G1P thus generated is used as the glycerophosphate backbone of phospholipids in the cellular membranes of Archaea. In Saccharolobus islandicus (strain Y.N.15.51 / Yellowstone #2) (Sulfolobus islandicus), this protein is Glycerol-1-phosphate dehydrogenase [NAD(P)+].